Here is a 493-residue protein sequence, read N- to C-terminus: Cytochrome c-552 (493 aa).

A signal peptide spans 1–25 (MEKKLKSWQGWLLSGGSMVVVFVLG). Histidine 116 is a heme c binding site. 3 residues coordinate heme: cysteine 144, cysteine 147, and lysine 148. Cysteine 182, cysteine 185, histidine 186, cysteine 224, cysteine 227, and histidine 228 together coordinate heme c. Glutamate 230, tyrosine 231, lysine 276, and glutamine 278 together coordinate Ca(2+). Residue tyrosine 231 coordinates substrate. Histidine 279 lines the substrate pocket. Heme c contacts are provided by histidine 290, cysteine 297, cysteine 300, histidine 301, histidine 315, cysteine 328, cysteine 331, histidine 332, and histidine 407.

This sequence belongs to the cytochrome c-552 family. The cofactor is Ca(2+). Requires heme c as cofactor.

The protein resides in the periplasm. It catalyses the reaction 6 Fe(III)-[cytochrome c] + NH4(+) + 2 H2O = 6 Fe(II)-[cytochrome c] + nitrite + 8 H(+). The protein operates within nitrogen metabolism; nitrate reduction (assimilation). Functionally, catalyzes the reduction of nitrite to ammonia, consuming six electrons in the process. The sequence is that of Cytochrome c-552 from Bacteroides thetaiotaomicron (strain ATCC 29148 / DSM 2079 / JCM 5827 / CCUG 10774 / NCTC 10582 / VPI-5482 / E50).